Reading from the N-terminus, the 676-residue chain is Nicastrin (676 aa).

Positions 1 to 28 are cleaved as a signal peptide; sequence MAMGLIRLLSIAFTLVLLSILPLHLSLA. The Extracellular segment spans residues 29–644; the sequence is DEITSIESVP…VYTVQHSAYD (616 aa). N-linked (GlcNAc...) asparagine glycans are attached at residues asparagine 58, asparagine 336, asparagine 371, asparagine 444, asparagine 480, asparagine 555, and asparagine 611. A helical membrane pass occupies residues 645–665; it reads NAVLVAGITVTTLAYIGILAA. At 666 to 676 the chain is on the cytoplasmic side; the sequence is KSIITKALKQD.

Belongs to the nicastrin family. Probable component of the gamma-secretase complex, a complex composed of a presenilin homodimer, nicastrin, APH1 and PEN2.

It is found in the membrane. Probable subunit of the gamma-secretase complex, an endoprotease complex that catalyzes the intramembrane cleavage of integral membrane proteins such as Notch. This chain is Nicastrin, found in Arabidopsis thaliana (Mouse-ear cress).